The chain runs to 116 residues: Large ribosomal subunit protein uL18 (116 aa).

This sequence belongs to the universal ribosomal protein uL18 family. As to quaternary structure, part of the 50S ribosomal subunit; part of the 5S rRNA/L5/L18/L25 subcomplex. Contacts the 5S and 23S rRNAs.

In terms of biological role, this is one of the proteins that bind and probably mediate the attachment of the 5S RNA into the large ribosomal subunit, where it forms part of the central protuberance. In Shewanella amazonensis (strain ATCC BAA-1098 / SB2B), this protein is Large ribosomal subunit protein uL18.